The chain runs to 293 residues: 4-diphosphocytidyl-2-C-methyl-D-erythritol kinase (293 aa).

Residue K23 is part of the active site. 109–119 (PVAAGIGGGSA) provides a ligand contact to ATP. D151 is a catalytic residue.

The protein belongs to the GHMP kinase family. IspE subfamily.

It catalyses the reaction 4-CDP-2-C-methyl-D-erythritol + ATP = 4-CDP-2-C-methyl-D-erythritol 2-phosphate + ADP + H(+). Its pathway is isoprenoid biosynthesis; isopentenyl diphosphate biosynthesis via DXP pathway; isopentenyl diphosphate from 1-deoxy-D-xylulose 5-phosphate: step 3/6. Its function is as follows. Catalyzes the phosphorylation of the position 2 hydroxy group of 4-diphosphocytidyl-2C-methyl-D-erythritol. In Rhizorhabdus wittichii (strain DSM 6014 / CCUG 31198 / JCM 15750 / NBRC 105917 / EY 4224 / RW1) (Sphingomonas wittichii), this protein is 4-diphosphocytidyl-2-C-methyl-D-erythritol kinase.